The primary structure comprises 150 residues: uncharacterized protein (150 aa).

One can recognise an HTH marR-type domain in the interval 1 to 133 (MNDILREIGM…ISALLHRVRK (133 aa)). A DNA-binding region (H-T-H motif) is located at residues 47 to 70 (QEKLAEMIKVDRTTAARAIKKLEM).

This is an uncharacterized protein from Bacillus subtilis (strain 168).